We begin with the raw amino-acid sequence, 130 residues long: Small ribosomal subunit protein uS9 (130 aa).

This sequence belongs to the universal ribosomal protein uS9 family.

In Stenotrophomonas maltophilia (strain R551-3), this protein is Small ribosomal subunit protein uS9.